The primary structure comprises 203 residues: MIAIIDYNAGNLRSIEKALELYTKNIVVTSDPETILSADKLVLPGVGNFGDSMKNISQKTGDCSLNEIINKCVQKVPFLGICLGMQLLLEKSEECPETPGLGVIKGDVIKFKHSEKIPHMGWNTVNQVQDIPLFEGIANNEYFYFVHSYHVNPSEKDVISGTTNYGYEFPCILNKKNVYATQFHPEKSGKNGLKMIENFVELI.

The Glutamine amidotransferase type-1 domain occupies 1-203 (MIAIIDYNAG…KMIENFVELI (203 aa)). Catalysis depends on cysteine 82, which acts as the Nucleophile. Catalysis depends on residues histidine 184 and glutamate 186.

As to quaternary structure, heterodimer of HisH and HisF.

It is found in the cytoplasm. The enzyme catalyses 5-[(5-phospho-1-deoxy-D-ribulos-1-ylimino)methylamino]-1-(5-phospho-beta-D-ribosyl)imidazole-4-carboxamide + L-glutamine = D-erythro-1-(imidazol-4-yl)glycerol 3-phosphate + 5-amino-1-(5-phospho-beta-D-ribosyl)imidazole-4-carboxamide + L-glutamate + H(+). The catalysed reaction is L-glutamine + H2O = L-glutamate + NH4(+). It participates in amino-acid biosynthesis; L-histidine biosynthesis; L-histidine from 5-phospho-alpha-D-ribose 1-diphosphate: step 5/9. Its function is as follows. IGPS catalyzes the conversion of PRFAR and glutamine to IGP, AICAR and glutamate. The HisH subunit provides the glutamine amidotransferase activity that produces the ammonia necessary to HisF for the synthesis of IGP and AICAR. This chain is Imidazole glycerol phosphate synthase subunit HisH 1 (hisH1), found in Methanococcus maripaludis (strain DSM 14266 / JCM 13030 / NBRC 101832 / S2 / LL).